A 453-amino-acid polypeptide reads, in one-letter code: Transcription factor radR (453 aa).

Positions methionine 1–asparagine 30 are enriched in polar residues. Residues methionine 1 to arginine 45 are disordered. Positions asparagine 30–isoleucine 62 constitute a bZIP domain. The tract at residues lysine 33–arginine 50 is basic motif. Positions isoleucine 51–leucine 58 are leucine-zipper. Positions alanine 160–glycine 184 are disordered. The segment covering alanine 170 to proline 181 has biased composition (polar residues).

Belongs to the bZIP family.

The protein resides in the nucleus. In terms of biological role, transcription factor that positively regulates the expression of the gene clusters that mediate the biosynthesis of pestheic acid, a diphenyl ether which is a biosynthetic precursor of the unique chloropupukeananes. The chain is Transcription factor radR from Floropilus chiversii (Chaetomium chiversii).